Here is an 85-residue protein sequence, read N- to C-terminus: Large ribosomal subunit protein bL27 (85 aa).

The interval 1 to 20 (MAHKKAAGSTRNGRDSEAKR) is disordered.

Belongs to the bacterial ribosomal protein bL27 family.

The chain is Large ribosomal subunit protein bL27 from Colwellia psychrerythraea (strain 34H / ATCC BAA-681) (Vibrio psychroerythus).